A 286-amino-acid chain; its full sequence is ATP synthase gamma chain (286 aa).

This sequence belongs to the ATPase gamma chain family. F-type ATPases have 2 components, CF(1) - the catalytic core - and CF(0) - the membrane proton channel. CF(1) has five subunits: alpha(3), beta(3), gamma(1), delta(1), epsilon(1). CF(0) has three main subunits: a, b and c.

The protein localises to the cell inner membrane. In terms of biological role, produces ATP from ADP in the presence of a proton gradient across the membrane. The gamma chain is believed to be important in regulating ATPase activity and the flow of protons through the CF(0) complex. The protein is ATP synthase gamma chain of Flavobacterium johnsoniae (strain ATCC 17061 / DSM 2064 / JCM 8514 / BCRC 14874 / CCUG 350202 / NBRC 14942 / NCIMB 11054 / UW101) (Cytophaga johnsonae).